Reading from the N-terminus, the 524-residue chain is GMP synthase [glutamine-hydrolyzing] (524 aa).

A Glutamine amidotransferase type-1 domain is found at 9-207; it reads RILILDFGSQ…VIHICQCIPN (199 aa). Cys-86 functions as the Nucleophile in the catalytic mechanism. Residues His-181 and Glu-183 contribute to the active site. A GMPS ATP-PPase domain is found at 208–399; that stretch reads WTTKHIIEDS…LGLPADLIYR (192 aa). 235 to 241 contributes to the ATP binding site; the sequence is SGGVDSA.

In terms of assembly, homodimer.

It catalyses the reaction XMP + L-glutamine + ATP + H2O = GMP + L-glutamate + AMP + diphosphate + 2 H(+). The protein operates within purine metabolism; GMP biosynthesis; GMP from XMP (L-Gln route): step 1/1. In terms of biological role, catalyzes the synthesis of GMP from XMP. This chain is GMP synthase [glutamine-hydrolyzing], found in Coxiella burnetii (strain RSA 493 / Nine Mile phase I).